Consider the following 265-residue polypeptide: MSFVSSKIFAITGGASGIGAATCRLLAKRGAATLCVGDLCSENMKLLEKDIKKINPDTKVHCTVLDVSSSSNVDEWIQDIITTFGDLHGAANIAGIAQGAGLRQAPTILEDDDQQWKKVFQVNLDGVLYSTRAQVRAMKEFSSTNPGDRSIVNVASIASMSHMPDVFAYGTSKAGCAYFTTFEVTLFALGYFSNIMGMLEGITRTPMLPRFVPSAKTQEEVEETYKKEGFSVIEADDVARTIVWLLSEDSRPVFGANINVGACMP.

Residues 1–20 form the signal peptide; that stretch reads MSFVSSKIFAITGGASGIGA. NADP(+)-binding residues include isoleucine 18, aspartate 66, arginine 132, tyrosine 169, lysine 173, and threonine 205. Catalysis depends on tyrosine 169, which acts as the Proton donor. Lysine 173 acts as the Lowers pKa of active site Tyr in catalysis.

It belongs to the short-chain dehydrogenases/reductases (SDR) family. In terms of assembly, homotetramer.

The catalysed reaction is chanoclavine-I + NAD(+) = chanoclavine-I aldehyde + NADH + H(+). It functions in the pathway alkaloid biosynthesis; ergot alkaloid biosynthesis. Chanoclavine-I dehydrogenase; part of the gene cluster that mediates the biosynthesis of fungal ergot alkaloid. DmaW catalyzes the first step of ergot alkaloid biosynthesis by condensing dimethylallyl diphosphate (DMAP) and tryptophan to form 4-dimethylallyl-L-tryptophan. The second step is catalyzed by the methyltransferase easF that methylates 4-dimethylallyl-L-tryptophan in the presence of S-adenosyl-L-methionine, resulting in the formation of 4-dimethylallyl-L-abrine. The catalase easC and the FAD-dependent oxidoreductase easE then transform 4-dimethylallyl-L-abrine to chanoclavine-I which is further oxidized by easD in the presence of NAD(+), resulting in the formation of chanoclavine-I aldehyde. Chanoclavine-I aldehyde is the precursor of ergoamides and ergopeptines in Clavicipitaceae, and clavine-type alcaloids such as fumiclavine in Trichocomaceae. However, the metabolites downstream of chanoclavine-I aldehyde in Arthrodermataceae have not been identified yet. The sequence is that of Chanoclavine-I dehydrogenase easD from Trichophyton verrucosum (strain HKI 0517).